A 208-amino-acid polypeptide reads, in one-letter code: High frequency lysogenization protein HflD homolog (208 aa).

It belongs to the HflD family.

The protein resides in the cytoplasm. Its subcellular location is the cell inner membrane. In Photorhabdus laumondii subsp. laumondii (strain DSM 15139 / CIP 105565 / TT01) (Photorhabdus luminescens subsp. laumondii), this protein is High frequency lysogenization protein HflD homolog.